Here is a 189-residue protein sequence, read N- to C-terminus: Elongation factor P (189 aa).

Position 34 is an N6-(3,6-diaminohexanoyl)-5-hydroxylysine (Lys-34).

The protein belongs to the elongation factor P family. In terms of processing, may be beta-lysylated on the epsilon-amino group of Lys-34 by the combined action of EpmA and EpmB, and then hydroxylated on the C5 position of the same residue by EpmC (if this protein is present). Lysylation is critical for the stimulatory effect of EF-P on peptide-bond formation. The lysylation moiety may extend toward the peptidyltransferase center and stabilize the terminal 3-CCA end of the tRNA. Hydroxylation of the C5 position on Lys-34 may allow additional potential stabilizing hydrogen-bond interactions with the P-tRNA.

The protein resides in the cytoplasm. The protein operates within protein biosynthesis; polypeptide chain elongation. Its function is as follows. Involved in peptide bond synthesis. Alleviates ribosome stalling that occurs when 3 or more consecutive Pro residues or the sequence PPG is present in a protein, possibly by augmenting the peptidyl transferase activity of the ribosome. Modification of Lys-34 is required for alleviation. This Idiomarina loihiensis (strain ATCC BAA-735 / DSM 15497 / L2-TR) protein is Elongation factor P.